A 353-amino-acid polypeptide reads, in one-letter code: Photosystem II D2 protein (353 aa).

Thr-2 is subject to N-acetylthreonine. Thr-2 carries the phosphothreonine modification. A helical membrane pass occupies residues 41 to 61 (CAYFALGGWFTGTTFVTSWYT). Position 118 (His-118) interacts with chlorophyll a. Residues 125–141 (GFMLRQFEIARSVNLRP) traverse the membrane as a helical segment. Gln-130 and Asn-143 together coordinate pheophytin a. The helical transmembrane segment at 153-166 (VFVSVFLIYPLGQS) threads the bilayer. Residue His-198 participates in chlorophyll a binding. Residues 208–228 (AALLCAIHGATVENTLFEDGD) form a helical membrane-spanning segment. Residues His-215 and Phe-262 each contribute to the a plastoquinone site. His-215 is a binding site for Fe cation. His-269 is a binding site for Fe cation. A helical transmembrane segment spans residues 279–295 (GLWMSAIGVVGLALNLR).

This sequence belongs to the reaction center PufL/M/PsbA/D family. In terms of assembly, PSII is composed of 1 copy each of membrane proteins PsbA, PsbB, PsbC, PsbD, PsbE, PsbF, PsbH, PsbI, PsbJ, PsbK, PsbL, PsbM, PsbT, PsbX, PsbY, PsbZ, Psb30/Ycf12, at least 3 peripheral proteins of the oxygen-evolving complex and a large number of cofactors. It forms dimeric complexes. The D1/D2 heterodimer binds P680, chlorophylls that are the primary electron donor of PSII, and subsequent electron acceptors. It shares a non-heme iron and each subunit binds pheophytin, quinone, additional chlorophylls, carotenoids and lipids. There is also a Cl(-1) ion associated with D1 and D2, which is required for oxygen evolution. The PSII complex binds additional chlorophylls, carotenoids and specific lipids. is required as a cofactor.

The protein localises to the plastid. The protein resides in the chloroplast thylakoid membrane. It catalyses the reaction 2 a plastoquinone + 4 hnu + 2 H2O = 2 a plastoquinol + O2. In terms of biological role, photosystem II (PSII) is a light-driven water:plastoquinone oxidoreductase that uses light energy to abstract electrons from H(2)O, generating O(2) and a proton gradient subsequently used for ATP formation. It consists of a core antenna complex that captures photons, and an electron transfer chain that converts photonic excitation into a charge separation. The D1/D2 (PsbA/PsbD) reaction center heterodimer binds P680, the primary electron donor of PSII as well as several subsequent electron acceptors. D2 is needed for assembly of a stable PSII complex. This Tetradesmus obliquus (Green alga) protein is Photosystem II D2 protein.